The sequence spans 502 residues: Lysine--tRNA ligase (502 aa).

Positions 399 and 406 each coordinate Mg(2+).

This sequence belongs to the class-II aminoacyl-tRNA synthetase family. As to quaternary structure, homodimer. Mg(2+) serves as cofactor.

The protein localises to the cytoplasm. It catalyses the reaction tRNA(Lys) + L-lysine + ATP = L-lysyl-tRNA(Lys) + AMP + diphosphate. The chain is Lysine--tRNA ligase from Synechococcus sp. (strain RCC307).